Reading from the N-terminus, the 436-residue chain is uncharacterized protein (436 aa).

Positions 1–19 are cleaved as a signal peptide; the sequence is MKKLLLASIIGLASTTSFA.

This is an uncharacterized protein from Rickettsia bellii (strain RML369-C).